We begin with the raw amino-acid sequence, 379 residues long: Probable pectin lyase B (379 aa).

Positions 1–20 (MHYKLLFAAAAASLASAVSA) are cleaved as a signal peptide. 2 cysteine pairs are disulfide-bonded: Cys-83/Cys-102 and Cys-92/Cys-226. N-linked (GlcNAc...) asparagine glycans are attached at residues Asn-129 and Asn-252. The active site involves Arg-256. A disulfide bond links Cys-323 and Cys-331.

The protein belongs to the polysaccharide lyase 1 family.

The protein resides in the secreted. The enzyme catalyses Eliminative cleavage of (1-&gt;4)-alpha-D-galacturonan methyl ester to give oligosaccharides with 4-deoxy-6-O-methyl-alpha-D-galact-4-enuronosyl groups at their non-reducing ends.. Pectinolytic enzymes consist of four classes of enzymes: pectin lyase, polygalacturonase, pectin methylesterase and rhamnogalacturonase. Among pectinolytic enzymes, pectin lyase is the most important in depolymerization of pectin, since it cleaves internal glycosidic bonds of highly methylated pectins. This chain is Probable pectin lyase B (pelB), found in Aspergillus niger (strain ATCC MYA-4892 / CBS 513.88 / FGSC A1513).